Reading from the N-terminus, the 197-residue chain is Adrenodoxin-like protein 1, mitochondrial (197 aa).

A mitochondrion-targeting transit peptide spans Met1 to Tyr35. Residues Glu79 to Thr184 enclose the 2Fe-2S ferredoxin-type domain. 4 residues coordinate [2Fe-2S] cluster: Cys118, Cys124, Cys127, and Cys165.

This sequence belongs to the adrenodoxin/putidaredoxin family. [2Fe-2S] cluster serves as cofactor.

It localises to the mitochondrion matrix. Associates in vitro with the adrenodoxin reductase MFDR to form an efficient low potential electron transfer chain that is able to reduce cytochrome C. Functions as accessory mitochondrial protein involved with BIO2 in the plant biotin synthase reaction. This is Adrenodoxin-like protein 1, mitochondrial from Arabidopsis thaliana (Mouse-ear cress).